We begin with the raw amino-acid sequence, 319 residues long: Ribosomal RNA large subunit methyltransferase F (319 aa).

The protein belongs to the methyltransferase superfamily. METTL16/RlmF family.

The protein localises to the cytoplasm. It catalyses the reaction adenosine(1618) in 23S rRNA + S-adenosyl-L-methionine = N(6)-methyladenosine(1618) in 23S rRNA + S-adenosyl-L-homocysteine + H(+). Functionally, specifically methylates the adenine in position 1618 of 23S rRNA. The protein is Ribosomal RNA large subunit methyltransferase F of Aliivibrio fischeri (strain ATCC 700601 / ES114) (Vibrio fischeri).